Reading from the N-terminus, the 546-residue chain is Chaperonin GroEL 2 (546 aa).

ATP-binding positions include 30–33 (TLGP), Lys-51, 87–91 (DGTTT), Gly-415, 479–481 (NAA), and Asp-495. Residues 524–546 (APKDAPPAQPAGVPGAGGTGFDF) form a disordered region. Residues 537–546 (PGAGGTGFDF) are compositionally biased toward gly residues.

The protein belongs to the chaperonin (HSP60) family. Forms a cylinder of 14 subunits composed of two heptameric rings stacked back-to-back. Interacts with the co-chaperonin GroES.

It is found in the cytoplasm. The enzyme catalyses ATP + H2O + a folded polypeptide = ADP + phosphate + an unfolded polypeptide.. Together with its co-chaperonin GroES, plays an essential role in assisting protein folding. The GroEL-GroES system forms a nano-cage that allows encapsulation of the non-native substrate proteins and provides a physical environment optimized to promote and accelerate protein folding. The polypeptide is Chaperonin GroEL 2 (Burkholderia thailandensis (strain ATCC 700388 / DSM 13276 / CCUG 48851 / CIP 106301 / E264)).